The chain runs to 297 residues: Transmembrane protein 169 (297 aa).

The tract at residues 1-84 is disordered; it reads MEEPALVEGQ…PKEEEGDDFI (84 aa). Residues 1–159 are Extracellular-facing; sequence MEEPALVEGQ…CQLGADRGPH (159 aa). Positions 9–18 are enriched in polar residues; sequence GQSQLPSPHH. Residues 60–84 show a composition bias toward acidic residues; sequence ETLDEEPGESEGGDQPKEEEGDDFI. The chain crosses the membrane as a helical span at residues 160–180; it reads VVLWTLVCLPVVFLLSFVVSF. At 181 to 210 the chain is on the cytoplasmic side; sequence YYGTITWYNIFLVYNEERTFWHKISCCPCL. Residues 211–231 form a helical membrane-spanning segment; it reads ILCYPVLIMAMASSLGLYAAV. Topologically, residues 232 to 297 are extracellular; sequence VQLSWSWEAW…ATQEIETSAV (66 aa).

The protein resides in the membrane. The chain is Transmembrane protein 169 (TMEM169) from Bos taurus (Bovine).